The chain runs to 272 residues: ATP-dependent Clp protease proteolytic subunit, mitochondrial (272 aa).

A mitochondrion-targeting transit peptide spans 1-52 (MWPRVLLGEARVAVDGCRALLSRLAVHFSPPWTAVSCSPLRRSLHGTATRAF). Residue serine 149 is the Nucleophile of the active site. Histidine 174 is an active-site residue. Lysine 196 is modified (N6-succinyllysine). An N6-acetyllysine modification is found at lysine 207. The interval 240 to 272 (VLVHPPQDGEDEPELVQKETATAPTDPPAPTST) is disordered.

It belongs to the peptidase S14 family. As to quaternary structure, fourteen CLPP subunits assemble into 2 heptameric rings which stack back to back to give a disk-like structure with a central cavity. Component of the ClpXP complex formed by the assembly of two CLPP heptameric rings with two CLPX hexameric rings, giving rise to a symmetrical structure with two central CLPP rings flanked by a CLPX ring at either end of the complex. As to expression, detected in liver (at protein level). High levels found in heart, liver and skeletal muscle.

The protein localises to the mitochondrion matrix. It carries out the reaction Hydrolysis of proteins to small peptides in the presence of ATP and magnesium. alpha-casein is the usual test substrate. In the absence of ATP, only oligopeptides shorter than five residues are hydrolyzed (such as succinyl-Leu-Tyr-|-NHMec, and Leu-Tyr-Leu-|-Tyr-Trp, in which cleavage of the -Tyr-|-Leu- and -Tyr-|-Trp bonds also occurs).. Its function is as follows. Protease component of the ClpXP complex that cleaves peptides and various proteins in an ATP-dependent process. Has low peptidase activity in the absence of CLPX. The ClpXP complex can degrade CSN1S1, CSN2 and CSN3, as well as synthetic peptides (in vitro) and may be responsible for a fairly general and central housekeeping function rather than for the degradation of specific substrates. Cleaves PINK1 in the mitochondrion. This Mus musculus (Mouse) protein is ATP-dependent Clp protease proteolytic subunit, mitochondrial.